The primary structure comprises 553 residues: Chaperonin GroEL 1 (553 aa).

Residues 29–32, 86–90, Gly413, 476–478, and Asp492 contribute to the ATP site; these read TIGP, DGTTT, and NAL. Positions 521-542 are disordered; the sequence is KPEPPAAPAPGGDPMGGMGGMG. The span at 533 to 542 shows a compositional bias: gly residues; that stretch reads DPMGGMGGMG.

The protein belongs to the chaperonin (HSP60) family. In terms of assembly, forms a cylinder of 14 subunits composed of two heptameric rings stacked back-to-back. Interacts with the co-chaperonin GroES.

Its subcellular location is the cytoplasm. It carries out the reaction ATP + H2O + a folded polypeptide = ADP + phosphate + an unfolded polypeptide.. Functionally, together with its co-chaperonin GroES, plays an essential role in assisting protein folding. The GroEL-GroES system forms a nano-cage that allows encapsulation of the non-native substrate proteins and provides a physical environment optimized to promote and accelerate protein folding. This chain is Chaperonin GroEL 1, found in Synechococcus sp. (strain WH7803).